The sequence spans 644 residues: N-acetylgalactosaminyltransferase 4 (644 aa).

Topologically, residues 1–13 (MAIKKRYVKRLLR) are cytoplasmic. Residues 14 to 34 (KVVLLLVVIVTVSLVTTLVVE) form a helical; Signal-anchor for type II membrane protein membrane-spanning segment. The Lumenal portion of the chain corresponds to 35-644 (RRMKNAAELT…MLDTFYDGLK (610 aa)). N-linked (GlcNAc...) asparagine glycans are attached at residues asparagine 157 and asparagine 179. Residues 177-288 (LPNISVIFIF…YNWLPPLIEP (112 aa)) are catalytic subdomain A. Residues aspartate 218 and arginine 249 each coordinate substrate. Aspartate 272 contributes to the Mn(2+) binding site. Serine 273 serves as a coordination point for substrate. Histidine 274 contacts Mn(2+). The segment at 345–407 (PYRSPVMMGG…PCSRVAHIFR (63 aa)) is catalytic subdomain B. Tryptophan 376 is a binding site for substrate. Histidine 404 contacts Mn(2+). Arginine 407 is a binding site for substrate. One can recognise a Ricin B-type lectin domain in the interval 496-629 (AAGIIQNVAN…GNDRQRWEFG (134 aa)). A disulfide bridge connects residues cysteine 509 and cysteine 526. N-linked (GlcNAc...) asparagine glycosylation is found at asparagine 529 and asparagine 565. Cystine bridges form between cysteine 556–cysteine 573 and cysteine 600–cysteine 617. N-linked (GlcNAc...) asparagine glycosylation occurs at asparagine 632.

The protein belongs to the glycosyltransferase 2 family. GalNAc-T subfamily. Requires Mn(2+) as cofactor. Expressed in developing oocytes and egg chambers. During embryonic stages 9-11, expressed in the primordium of the foregut, midgut and hindgut. During embryonic stages 12-13, shows specific expression in the proventriculus that continues until the end of embryogenesis. In third instar larvae, ubiquitously expressed in wing, eye-antennal, leg and haltere imaginal disks.

It localises to the golgi apparatus membrane. It catalyses the reaction L-seryl-[protein] + UDP-N-acetyl-alpha-D-galactosamine = a 3-O-[N-acetyl-alpha-D-galactosaminyl]-L-seryl-[protein] + UDP + H(+). It carries out the reaction L-threonyl-[protein] + UDP-N-acetyl-alpha-D-galactosamine = a 3-O-[N-acetyl-alpha-D-galactosaminyl]-L-threonyl-[protein] + UDP + H(+). The protein operates within protein modification; protein glycosylation. Glycopeptide transferase involved in O-linked oligosaccharide biosynthesis, which catalyzes the transfer of an N-acetyl-D-galactosamine residue to an already glycosylated peptide. In contrast to other proteins of the family, it does not act as a peptide transferase that transfers GalNAc onto serine or threonine residue on the protein receptor, but instead requires the prior addition of a GalNAc on a peptide before adding additional GalNAc moieties. Some peptide transferase activity is however not excluded, considering that its appropriate peptide substrate may remain unidentified. Prefers the diglycosylated Muc5AC-3/13 as substrate. In Drosophila melanogaster (Fruit fly), this protein is N-acetylgalactosaminyltransferase 4.